Reading from the N-terminus, the 313-residue chain is Transcription initiation factor IIB 2 (313 aa).

A TFIIB-type zinc finger spans residues 13–44; the sequence is APKRCPECHSEHLIRDYEHGELICADCGAVIE. Zn(2+) contacts are provided by Cys-17, Cys-20, Cys-36, and Cys-39. 2 repeat units span residues 130-213 and 224-305.

The protein belongs to the TFIIB family.

In terms of biological role, stabilizes TBP binding to an archaeal box-A promoter. Also responsible for recruiting RNA polymerase II to the pre-initiation complex (DNA-TBP-TFIIB). The chain is Transcription initiation factor IIB 2 from Thermoplasma volcanium (strain ATCC 51530 / DSM 4299 / JCM 9571 / NBRC 15438 / GSS1).